A 128-amino-acid chain; its full sequence is Ribosome-binding factor A (128 aa).

Belongs to the RbfA family. As to quaternary structure, monomer. Binds 30S ribosomal subunits, but not 50S ribosomal subunits or 70S ribosomes.

The protein resides in the cytoplasm. One of several proteins that assist in the late maturation steps of the functional core of the 30S ribosomal subunit. Associates with free 30S ribosomal subunits (but not with 30S subunits that are part of 70S ribosomes or polysomes). Required for efficient processing of 16S rRNA. May interact with the 5'-terminal helix region of 16S rRNA. In Idiomarina loihiensis (strain ATCC BAA-735 / DSM 15497 / L2-TR), this protein is Ribosome-binding factor A.